The sequence spans 184 residues: Probable S-adenosyl-L-methionine-binding protein PYRAB06630 (184 aa).

The TsaA-like domain maps to 9 to 140 (YRPIGIIHSP…YVPEFDVREN (132 aa)). S-adenosyl-L-methionine is bound by residues 26–28 (PIQ), 65–66 (HR), Arg-89, and 120–123 (LDGT).

This sequence belongs to the tRNA methyltransferase O family.

The polypeptide is Probable S-adenosyl-L-methionine-binding protein PYRAB06630 (Pyrococcus abyssi (strain GE5 / Orsay)).